The following is a 340-amino-acid chain: Probable peroxidase 61 (340 aa).

An N-terminal signal peptide occupies residues 1–25; it reads MQFVNFFPLLALVVISLAGKATVEA. Intrachain disulfides connect Cys-46-Cys-122, Cys-79-Cys-84, Cys-128-Cys-331, and Cys-205-Cys-237. An N-linked (GlcNAc...) asparagine glycan is attached at Asn-63. Arg-73 is an active-site residue. Ca(2+)-binding residues include Asp-78, Val-81, Gly-83, Asp-85, and Ser-87. Pro-168 contributes to the substrate binding site. His-198 contributes to the heme b binding site. Ser-199 is a Ca(2+) binding site. N-linked (GlcNAc...) asparagine glycosylation is present at Asn-226. 2 residues coordinate Ca(2+): Asp-255 and Ser-258.

This sequence belongs to the peroxidase family. Classical plant (class III) peroxidase subfamily. Heme b is required as a cofactor. Requires Ca(2+) as cofactor.

Its subcellular location is the secreted. It catalyses the reaction 2 a phenolic donor + H2O2 = 2 a phenolic radical donor + 2 H2O. Removal of H(2)O(2), oxidation of toxic reductants, biosynthesis and degradation of lignin, suberization, auxin catabolism, response to environmental stresses such as wounding, pathogen attack and oxidative stress. The enzyme activity has to be proved. This is Probable peroxidase 61 (PER61) from Arabidopsis thaliana (Mouse-ear cress).